The primary structure comprises 248 residues: Triosephosphate isomerase (248 aa).

9-11 (NWK) lines the substrate pocket. His95 (electrophile) is an active-site residue. The Proton acceptor role is filled by Glu166. Substrate is bound by residues Gly172, Ser210, and 231 to 232 (GG).

The protein belongs to the triosephosphate isomerase family. In terms of assembly, homodimer.

It localises to the cytoplasm. The catalysed reaction is D-glyceraldehyde 3-phosphate = dihydroxyacetone phosphate. It participates in carbohydrate biosynthesis; gluconeogenesis. It functions in the pathway carbohydrate degradation; glycolysis; D-glyceraldehyde 3-phosphate from glycerone phosphate: step 1/1. Its function is as follows. Involved in the gluconeogenesis. Catalyzes stereospecifically the conversion of dihydroxyacetone phosphate (DHAP) to D-glyceraldehyde-3-phosphate (G3P). This Delftia acidovorans (strain DSM 14801 / SPH-1) protein is Triosephosphate isomerase.